We begin with the raw amino-acid sequence, 563 residues long: Rhodopsin kinase GRK1 (563 aa).

The interaction with RCVRN stretch occupies residues 1–15 (MDFGSLETVVANSAF). The tract at residues 1–189 (MDFGSLETVV…LEAQPMGEDW (189 aa)) is N-terminal. Ser-5 carries the phosphoserine modification. Residue Thr-8 is modified to Phosphothreonine. Ser-21 is subject to Phosphoserine; by PKA and autocatalysis. In terms of domain architecture, RGS spans 58 to 175 (FESVCLEQPI…LGSLYFLRFL (118 aa)). A Protein kinase domain is found at 190–455 (FLDFRVLGKG…CDKLRAHPLF (266 aa)). ATP-binding positions include 196–204 (LGKGGFGEV) and Lys-219. Residue Asp-317 is the Proton acceptor of the active site. One can recognise an AGC-kinase C-terminal domain in the interval 456-521 (KDLNWRQLEA…GNCPIPWQEE (66 aa)). Residues 456-563 (KDLNWRQLEA…SSKSGMCLVS (108 aa)) form a C-terminal region. At Ser-491 the chain carries Phosphoserine; by autocatalysis. Thr-492 is subject to Phosphothreonine; by autocatalysis. The segment at 539-563 (QMPDDMKGISGGSSSSSKSGMCLVS) is disordered. Low complexity predominate over residues 550-563 (GSSSSSKSGMCLVS). At Cys-560 the chain carries Cysteine methyl ester. Cys-560 is lipidated: S-farnesyl cysteine. A propeptide spans 561-563 (LVS) (removed in mature form).

The protein belongs to the protein kinase superfamily. AGC Ser/Thr protein kinase family. GPRK subfamily. As to quaternary structure, interacts (via N-terminus) with RCVRN (via C-terminus); the interaction is Ca(2+)-dependent. Interacts (when prenylated) with PDE6D; this promotes release from membranes. May form a complex composed of RHO, GRK1 and RCVRN in a Ca(2+)-dependent manner; RCVRN prevents the interaction between GRK1 and RHO. Post-translationally, autophosphorylated, Ser-21 is a minor site of autophosphorylation compared to Ser-491 and Thr-492. Phosphorylation at Ser-21 is regulated by light and activated by cAMP. In terms of processing, farnesylation is required for full activity. As to expression, retinal-specific. Expressed in rods and cones cells.

The protein resides in the membrane. It localises to the cell projection. It is found in the cilium. Its subcellular location is the photoreceptor outer segment. The enzyme catalyses L-threonyl-[rhodopsin] + ATP = O-phospho-L-threonyl-[rhodopsin] + ADP + H(+). It carries out the reaction L-seryl-[rhodopsin] + ATP = O-phospho-L-seryl-[rhodopsin] + ADP + H(+). Inhibited by RCVRN, which prevents the interaction between GRK1 and RHO. Inhibition is calcium-dependent. Inhibited by phosphorylation of Ser-21. In terms of biological role, retina-specific kinase involved in the signal turnoff via phosphorylation of rhodopsin (RHO), the G protein- coupled receptor that initiates the phototransduction cascade. This rapid desensitization is essential for scotopic vision and permits rapid adaptation to changes in illumination. May play a role in the maintenance of the outer nuclear layer in the retina. The chain is Rhodopsin kinase GRK1 from Homo sapiens (Human).